The sequence spans 493 residues: ATP synthase subunit beta 3 (493 aa).

Residues 113 to 138 (VPGDNGTPLPPGTPRRPIHRKPPPLA) form a disordered region. ATP is bound at residue 170 to 177 (GGAGVGKT).

This sequence belongs to the ATPase alpha/beta chains family. In terms of assembly, F-type ATPases have 2 components, CF(1) - the catalytic core - and CF(0) - the membrane proton channel. CF(1) has five subunits: alpha(3), beta(3), gamma(1), delta(1), epsilon(1). CF(0) has three main subunits: a(1), b(2) and c(9-12). The alpha and beta chains form an alternating ring which encloses part of the gamma chain. CF(1) is attached to CF(0) by a central stalk formed by the gamma and epsilon chains, while a peripheral stalk is formed by the delta and b chains.

It is found in the cell inner membrane. It catalyses the reaction ATP + H2O + 4 H(+)(in) = ADP + phosphate + 5 H(+)(out). In terms of biological role, produces ATP from ADP in the presence of a proton gradient across the membrane. The catalytic sites are hosted primarily by the beta subunits. The protein is ATP synthase subunit beta 3 of Paraburkholderia xenovorans (strain LB400).